Here is a 138-residue protein sequence, read N- to C-terminus: Cell division protein SepF (138 aa).

A disordered region spans residues Met1 to Pro59. The span at Met33–Val48 shows a compositional bias: polar residues.

The protein belongs to the SepF family. In terms of assembly, homodimer. Interacts with FtsZ.

The protein resides in the cytoplasm. Its function is as follows. Cell division protein that is part of the divisome complex and is recruited early to the Z-ring. Probably stimulates Z-ring formation, perhaps through the cross-linking of FtsZ protofilaments. Its function overlaps with FtsA. This Lactobacillus delbrueckii subsp. bulgaricus (strain ATCC 11842 / DSM 20081 / BCRC 10696 / JCM 1002 / NBRC 13953 / NCIMB 11778 / NCTC 12712 / WDCM 00102 / Lb 14) protein is Cell division protein SepF.